The chain runs to 39 residues: Large ribosomal subunit protein bL36 (39 aa).

Belongs to the bacterial ribosomal protein bL36 family.

This Oenococcus oeni (strain ATCC BAA-331 / PSU-1) protein is Large ribosomal subunit protein bL36.